Consider the following 295-residue polypeptide: Acetylglutamate kinase (295 aa).

Substrate is bound by residues Gly-66–Gly-67, Arg-88, and Asn-193.

The protein belongs to the acetylglutamate kinase family. ArgB subfamily.

The protein resides in the cytoplasm. The catalysed reaction is N-acetyl-L-glutamate + ATP = N-acetyl-L-glutamyl 5-phosphate + ADP. The protein operates within amino-acid biosynthesis; L-arginine biosynthesis; N(2)-acetyl-L-ornithine from L-glutamate: step 2/4. Functionally, catalyzes the ATP-dependent phosphorylation of N-acetyl-L-glutamate. This is Acetylglutamate kinase from Rhizobium johnstonii (strain DSM 114642 / LMG 32736 / 3841) (Rhizobium leguminosarum bv. viciae).